We begin with the raw amino-acid sequence, 273 residues long: MAALFLKKLTLQTVKTENYCIRRCLGKYILQGPAPTQQPPRPSCLIHAKAFSTEDTQDEMTKKKKNETAFSSVGRKINERIIHVLDEQGNDLGHMHRANVIRLMAERDLRLVKRDASAEPPQYQLLTGAQIHQERLRLREAERAAPKPGPTLTKELTFSSNIGQHDLDTKSKQIQQWIEKKYKVQITVKKGKSADEPEDKMEEMCNRIVQTMSGIATFSSRPQPIRGGKAVMCVLRPLSKKEEAAWKAAPDTPRRDALNGGDGKDGASGVLPQ.

A mitochondrion-targeting transit peptide spans 1–32 (MAALFLKKLTLQTVKTENYCIRRCLGKYILQG). Positions 33–92 (PAPTQQPPRPSCLIHAKAFSTEDTQDEMTKKKKNETAFSSVGRKINERIIHVLDEQGNDL) are cleaved as a propeptide — removed in mature form. The tract at residues 242–273 (EEAAWKAAPDTPRRDALNGGDGKDGASGVLPQ) is disordered. Basic and acidic residues predominate over residues 252–265 (TPRRDALNGGDGKD).

The protein belongs to the IF-3 family.

The protein localises to the mitochondrion. In terms of biological role, IF-3 binds to the 28S ribosomal subunit and shifts the equilibrium between 55S ribosomes and their 39S and 28S subunits in favor of the free subunits, thus enhancing the availability of 28S subunits on which protein synthesis initiation begins. This Bos taurus (Bovine) protein is Translation initiation factor IF-3, mitochondrial (MTIF3).